Reading from the N-terminus, the 189-residue chain is Chitin synthase 1 (189 aa).

This sequence belongs to the chitin synthase family. Class I subfamily.

It is found in the cell membrane. It catalyses the reaction [(1-&gt;4)-N-acetyl-beta-D-glucosaminyl](n) + UDP-N-acetyl-alpha-D-glucosamine = [(1-&gt;4)-N-acetyl-beta-D-glucosaminyl](n+1) + UDP + H(+). Functionally, polymerizes chitin, a structural polymer of the cell wall and septum, by transferring the sugar moiety of UDP-GlcNAc to the non-reducing end of the growing chitin polymer. The polypeptide is Chitin synthase 1 (CHS1) (Ajellomyces capsulatus (Darling's disease fungus)).